The following is a 407-amino-acid chain: Snake venom metalloproteinase ACLH (407 aa).

Residues 1–20 form the signal peptide; sequence MIQVLLVTLCLAAFPYQGSS. Residues 21–187 constitute a propeptide that is removed on maturation; the sequence is IILESGNVND…PIKKASQLNL (167 aa). The Peptidase M12B domain maps to 193–389; the sequence is RYVELVTVVD…ENPQCILNKP (197 aa). 2 residues coordinate Ca(2+): glutamate 196 and aspartate 280. Cystine bridges form between cysteine 304–cysteine 384, cysteine 344–cysteine 368, and cysteine 346–cysteine 351. Histidine 329 provides a ligand contact to Zn(2+). Residue glutamate 330 is part of the active site. Residues histidine 333 and histidine 339 each contribute to the Zn(2+) site. The N-linked (GlcNAc...) asparagine glycan is linked to asparagine 367. The Ca(2+) site is built by cysteine 384 and asparagine 387.

This sequence belongs to the venom metalloproteinase (M12B) family. P-I subfamily. Monomer. It depends on Zn(2+) as a cofactor. Contains sialic acid terminally alpha(2-6)-linked to galactose in a complex N-glycan chain. In terms of tissue distribution, expressed by the venom gland.

The protein localises to the secreted. In terms of biological role, this zinc hemorrhagic metalloproteinase has fibrino(geno)lytic activities. It causes hemorrhage and has myonecrotic activity on both fiber types I and II. The recombinant enzyme, without post-translational modifications, also has proteolytic activity, but does not show any hemorrhagic activity. This is Snake venom metalloproteinase ACLH from Agkistrodon contortrix laticinctus (Broad-banded copperhead).